A 505-amino-acid polypeptide reads, in one-letter code: 2,3-bisphosphoglycerate-independent phosphoglycerate mutase (505 aa).

2 residues coordinate Mn(2+): Asp-12 and Ser-62. Residue Ser-62 is the Phosphoserine intermediate of the active site. Residues His-123, 153–154 (RD), Arg-185, Arg-191, 257–260 (RPDR), and Lys-330 each bind substrate. Positions 397, 401, 438, 439, and 456 each coordinate Mn(2+).

This sequence belongs to the BPG-independent phosphoglycerate mutase family. In terms of assembly, monomer. Requires Mn(2+) as cofactor.

The enzyme catalyses (2R)-2-phosphoglycerate = (2R)-3-phosphoglycerate. Its pathway is carbohydrate degradation; glycolysis; pyruvate from D-glyceraldehyde 3-phosphate: step 3/5. Its function is as follows. Catalyzes the interconversion of 2-phosphoglycerate and 3-phosphoglycerate. The polypeptide is 2,3-bisphosphoglycerate-independent phosphoglycerate mutase (Staphylococcus aureus (strain COL)).